We begin with the raw amino-acid sequence, 138 residues long: Basic phospholipase A2 homolog TM-N49 (138 aa).

An N-terminal signal peptide occupies residues 1 to 16 (MRTLWIMAVLLLGVEG). 7 disulfide bridges follow: cysteine 42–cysteine 131, cysteine 44–cysteine 60, cysteine 59–cysteine 111, cysteine 65–cysteine 138, cysteine 66–cysteine 104, cysteine 73–cysteine 97, and cysteine 91–cysteine 102.

This sequence belongs to the phospholipase A2 family. Group II subfamily. N49 sub-subfamily. Homodimer; non-covalently linked. In terms of tissue distribution, expressed by the venom gland.

It is found in the secreted. Snake venom phospholipase A2 (PLA2) that exhibits potent myotoxic activity causing inflammatory cell infiltration, severe myoedema, myonecrosis and myolysis in the gastrocnemius muscles of BALB/c mice. This is Basic phospholipase A2 homolog TM-N49 from Protobothrops mucrosquamatus (Taiwan habu).